The sequence spans 95 residues: Co-chaperonin GroES (95 aa).

Belongs to the GroES chaperonin family. Heptamer of 7 subunits arranged in a ring. Interacts with the chaperonin GroEL.

The protein resides in the cytoplasm. Its function is as follows. Together with the chaperonin GroEL, plays an essential role in assisting protein folding. The GroEL-GroES system forms a nano-cage that allows encapsulation of the non-native substrate proteins and provides a physical environment optimized to promote and accelerate protein folding. GroES binds to the apical surface of the GroEL ring, thereby capping the opening of the GroEL channel. This is Co-chaperonin GroES from Francisella tularensis subsp. holarctica (strain FTNF002-00 / FTA).